Consider the following 124-residue polypeptide: Ribonuclease P protein component (124 aa).

It belongs to the RnpA family. In terms of assembly, consists of a catalytic RNA component (M1 or rnpB) and a protein subunit.

The enzyme catalyses Endonucleolytic cleavage of RNA, removing 5'-extranucleotides from tRNA precursor.. RNaseP catalyzes the removal of the 5'-leader sequence from pre-tRNA to produce the mature 5'-terminus. It can also cleave other RNA substrates such as 4.5S RNA. The protein component plays an auxiliary but essential role in vivo by binding to the 5'-leader sequence and broadening the substrate specificity of the ribozyme. The polypeptide is Ribonuclease P protein component (Mycolicibacterium gilvum (strain PYR-GCK) (Mycobacterium gilvum (strain PYR-GCK))).